An 89-amino-acid chain; its full sequence is Small ribosomal subunit protein bS20 (89 aa).

This sequence belongs to the bacterial ribosomal protein bS20 family.

Functionally, binds directly to 16S ribosomal RNA. This Syntrophus aciditrophicus (strain SB) protein is Small ribosomal subunit protein bS20.